A 420-amino-acid polypeptide reads, in one-letter code: Trophoblast glycoprotein (420 aa).

Residues 1 to 31 form the signal peptide; sequence MPGGCSRGPAAGDGRLRLARLALVLLGWVSS. Topologically, residues 32–355 are extracellular; sequence SSPTSSASSF…PILPPSLQTS (324 aa). Residues 53-91 enclose the LRRNT domain; it reads SAQPPLPDQCPALCECSEAARTVKCVNRNLTEVPTDLPA. Disulfide bonds link cysteine 62-cysteine 68 and cysteine 66-cysteine 77. Residue asparagine 81 is glycosylated (N-linked (GlcNAc...) asparagine). LRR repeat units lie at residues 92–113, 116–139, 141–163, 172–204, 209–232, 233–255, and 256–275; these read YVRN…AFAR, PLAE…GAFE, LPSL…FAFS, PSPL…AALL, LQGL…VLAQ, LPSL…VSFR, and NLTH…VLHN. Asparagine 124 carries N-linked (GlcNAc...) asparagine glycosylation. The N-linked (GlcNAc...) asparagine glycan is linked to asparagine 275. In terms of domain architecture, LRRCT spans 283-346; sequence GLPHIRVFLD…LNSADLDCDP (64 aa). Disulfide bonds link cysteine 298–cysteine 323 and cysteine 300–cysteine 344. A helical transmembrane segment spans residues 356-376; sequence YVFLGIVLALIGAIFLLVLYL. Over 377 to 420 the chain is Cytoplasmic; the sequence is NRKGIKKWMHNIRDACRDHMEGYHYRYEINADPRLTNLSSNSDV. At serine 418 the chain carries Phosphoserine.

Post-translationally, highly glycosylated. Expressed by all types of trophoblasts as early as 9 weeks of development. Specific for trophoblastic cells except for amniotic epithelium. In adult tissues, the expression is limited to a few epithelial cell types but is found on a variety of carcinoma.

The protein resides in the cell membrane. Functionally, may function as an inhibitor of Wnt/beta-catenin signaling by indirectly interacting with LRP6 and blocking Wnt3a-dependent LRP6 internalization. The protein is Trophoblast glycoprotein (TPBG) of Homo sapiens (Human).